The sequence spans 149 residues: Deoxyuridine 5'-triphosphate nucleotidohydrolase (149 aa).

Residues 68 to 70 (RSG), asparagine 81, and 85 to 87 (LID) each bind substrate.

The protein belongs to the dUTPase family. The cofactor is Mg(2+).

It catalyses the reaction dUTP + H2O = dUMP + diphosphate + H(+). It participates in pyrimidine metabolism; dUMP biosynthesis; dUMP from dCTP (dUTP route): step 2/2. In terms of biological role, this enzyme is involved in nucleotide metabolism: it produces dUMP, the immediate precursor of thymidine nucleotides and it decreases the intracellular concentration of dUTP so that uracil cannot be incorporated into DNA. The protein is Deoxyuridine 5'-triphosphate nucleotidohydrolase of Nitrosospira multiformis (strain ATCC 25196 / NCIMB 11849 / C 71).